The primary structure comprises 749 residues: NAD(P)H-quinone oxidoreductase subunit 5, chloroplastic (749 aa).

The next 16 helical transmembrane spans lie at 9–29, 40–60, 89–109, 147–167, 185–205, 219–239, 258–278, 280–300, 327–347, 354–374, 396–416, 425–445, 544–564, 605–625, 694–714, and 722–742; these read WIIPFIPLTVPMSIGLGLLLV, WAFFSVSLLSIVMVFSADLSI, IDPLTSIMLILITTVGIMVLI, IYIFWELVGMCSYLLIGFWFT, GDFGLLLGILGLYWITGSFEF, NGVNSLFVTFFASLLFLGAVA, TPISALIHAATMVVAGIFLVA, LLPLFTVIPYIMNLISLIGVI, LGYIMLAPGIGSYRAASFHLI, ALLFLGSGSIIHSMEPIVGYS, ITFLLGTLSLCGIPPLACFWS, WLYSPIFAIIACFTTGLTAFY, TMLLPLLVLVIFTLFVGFIGV, IFSVSIACFGIWIASLLYGSV, GITNGFGIASFFVGEGVKYVG, and LFLYLSYVSIFLVISYFCFGI.

This sequence belongs to the complex I subunit 5 family. In terms of assembly, NDH is composed of at least 16 different subunits, 5 of which are encoded in the nucleus.

It is found in the plastid. Its subcellular location is the chloroplast thylakoid membrane. The enzyme catalyses a plastoquinone + NADH + (n+1) H(+)(in) = a plastoquinol + NAD(+) + n H(+)(out). It catalyses the reaction a plastoquinone + NADPH + (n+1) H(+)(in) = a plastoquinol + NADP(+) + n H(+)(out). Its function is as follows. NDH shuttles electrons from NAD(P)H:plastoquinone, via FMN and iron-sulfur (Fe-S) centers, to quinones in the photosynthetic chain and possibly in a chloroplast respiratory chain. The immediate electron acceptor for the enzyme in this species is believed to be plastoquinone. Couples the redox reaction to proton translocation, and thus conserves the redox energy in a proton gradient. The polypeptide is NAD(P)H-quinone oxidoreductase subunit 5, chloroplastic (ndhF) (Illicium oligandrum (Star anise)).